Consider the following 453-residue polypeptide: Adenylyltransferase and sulfurtransferase MOCS3 (453 aa).

A Phosphothreonine modification is found at threonine 62. Residues glycine 101, aspartate 122, 129 to 133 (SNFHR), lysine 146, and 190 to 191 (DN) each bind ATP. 2 residues coordinate Zn(2+): cysteine 231 and cysteine 234. Cysteine 248 acts as the Glycyl thioester intermediate; for adenylyltransferase activity in catalysis. Cysteine 306 and cysteine 309 together coordinate Zn(2+). Residues 355 to 451 (QAKPHLLIDV…WTSNIDPNFP (97 aa)) enclose the Rhodanese domain. Cysteine 410 acts as the Cysteine persulfide intermediate; for sulfurtransferase activity in catalysis.

In the N-terminal section; belongs to the HesA/MoeB/ThiF family. UBA4 subfamily. It depends on Zn(2+) as a cofactor.

The protein localises to the cytoplasm. It localises to the cytosol. The enzyme catalyses [molybdopterin-synthase sulfur-carrier protein]-C-terminal Gly-Gly + ATP + H(+) = [molybdopterin-synthase sulfur-carrier protein]-C-terminal Gly-Gly-AMP + diphosphate. It catalyses the reaction [molybdopterin-synthase sulfur-carrier protein]-C-terminal Gly-Gly-AMP + S-sulfanyl-L-cysteinyl-[cysteine desulfurase] + AH2 = [molybdopterin-synthase sulfur-carrier protein]-C-terminal-Gly-aminoethanethioate + L-cysteinyl-[cysteine desulfurase] + A + AMP + 2 H(+). The protein operates within tRNA modification; 5-methoxycarbonylmethyl-2-thiouridine-tRNA biosynthesis. It participates in cofactor biosynthesis; molybdopterin biosynthesis. Functionally, plays a central role in 2-thiolation of mcm(5)S(2)U at tRNA wobble positions of cytosolic tRNA(Lys), tRNA(Glu) and tRNA(Gln). Also essential during biosynthesis of the molybdenum cofactor. Acts by mediating the C-terminal thiocarboxylation of sulfur carriers URM1 and MOCS2A. Its N-terminus first activates URM1 and MOCS2A as acyl-adenylates (-COAMP), then the persulfide sulfur on the catalytic cysteine is transferred to URM1 and MOCS2A to form thiocarboxylation (-COSH) of their C-terminus. The reaction probably involves hydrogen sulfide that is generated from the persulfide intermediate and that acts as a nucleophile towards URM1 and MOCS2A. Subsequently, a transient disulfide bond is formed. Does not use thiosulfate as sulfur donor; NFS1 probably acting as a sulfur donor for thiocarboxylation reactions. In Drosophila sechellia (Fruit fly), this protein is Adenylyltransferase and sulfurtransferase MOCS3.